The following is a 348-amino-acid chain: Uroporphyrinogen decarboxylase (348 aa).

Substrate is bound by residues 29–33 (RQAGR), Asp-79, Tyr-155, Thr-210, and His-326.

It belongs to the uroporphyrinogen decarboxylase family. Homodimer.

The protein localises to the cytoplasm. The enzyme catalyses uroporphyrinogen III + 4 H(+) = coproporphyrinogen III + 4 CO2. The protein operates within porphyrin-containing compound metabolism; protoporphyrin-IX biosynthesis; coproporphyrinogen-III from 5-aminolevulinate: step 4/4. Its function is as follows. Catalyzes the decarboxylation of four acetate groups of uroporphyrinogen-III to yield coproporphyrinogen-III. This Rhodospirillum rubrum (strain ATCC 11170 / ATH 1.1.1 / DSM 467 / LMG 4362 / NCIMB 8255 / S1) protein is Uroporphyrinogen decarboxylase.